The chain runs to 217 residues: Large ribosomal subunit protein uL3 (217 aa).

Belongs to the universal ribosomal protein uL3 family. Part of the 50S ribosomal subunit. Forms a cluster with proteins L14 and L19.

In terms of biological role, one of the primary rRNA binding proteins, it binds directly near the 3'-end of the 23S rRNA, where it nucleates assembly of the 50S subunit. In Mycobacterium marinum (strain ATCC BAA-535 / M), this protein is Large ribosomal subunit protein uL3.